The sequence spans 128 residues: DNA-directed RNA polymerase subunit omega (128 aa).

This sequence belongs to the RNA polymerase subunit omega family. In terms of assembly, the RNAP catalytic core consists of 2 alpha, 1 beta, 1 beta' and 1 omega subunit. When a sigma factor is associated with the core the holoenzyme is formed, which can initiate transcription.

It catalyses the reaction RNA(n) + a ribonucleoside 5'-triphosphate = RNA(n+1) + diphosphate. In terms of biological role, promotes RNA polymerase assembly. Latches the N- and C-terminal regions of the beta' subunit thereby facilitating its interaction with the beta and alpha subunits. This is DNA-directed RNA polymerase subunit omega from Azorhizobium caulinodans (strain ATCC 43989 / DSM 5975 / JCM 20966 / LMG 6465 / NBRC 14845 / NCIMB 13405 / ORS 571).